The sequence spans 445 residues: MKPVIALVGRPNVGKSTLFNRLTRSRDALVADLPGLTRDRHYGEGRVGERPYLVVDTGGFEPVAKDGILHQMARQTRQAVEEADVVVFIVDGRNGLAPQDKSIADYLRKTGRPIFLVVNKAEGMKYTAVATDFYELGLGDPRAISAAHGDGVTDMINEALEVAYAGQPEEADEDDPSRGIKIAIVGRPNVGKSTLVNALIGEDRVIAFDMPGTTRDSIYVDFERNGKKYTLIDTAGLRRRGKVFEAIEKFSVVKTLQSISDANVVILLLDAQQDISDQDAHIAGFVVEQGRALVIGVNKWDGLDDHARDRAKADLTRKLKFLDFAKSHYISAAKKTGIGALMRSVDDAYAAAMAKLPTPKLTRALIEAVEFQQPRRRGPVRPKLRYAHQGGQNPPLIVIHGNALDAVTETYKRYLENRFRETFSLTGTPLRIEFRSSNNPYADKG.

EngA-type G domains lie at 3–167 (PVIA…YAGQ) and 180–353 (IKIA…AAAM). GTP contacts are provided by residues 9 to 16 (GRPNVGKS), 56 to 60 (DTGGF), 119 to 122 (NKAE), 186 to 193 (GRPNVGKS), 233 to 237 (DTAGL), and 298 to 301 (NKWD). The 85-residue stretch at 354–438 (AKLPTPKLTR…PLRIEFRSSN (85 aa)) folds into the KH-like domain.

It belongs to the TRAFAC class TrmE-Era-EngA-EngB-Septin-like GTPase superfamily. EngA (Der) GTPase family. As to quaternary structure, associates with the 50S ribosomal subunit.

Its function is as follows. GTPase that plays an essential role in the late steps of ribosome biogenesis. The sequence is that of GTPase Der from Burkholderia ambifaria (strain ATCC BAA-244 / DSM 16087 / CCUG 44356 / LMG 19182 / AMMD) (Burkholderia cepacia (strain AMMD)).